The sequence spans 361 residues: Peptide chain release factor 1 (361 aa).

Glutamine 237 carries the post-translational modification N5-methylglutamine. The segment at 285–306 is disordered; sequence QAEQSAQQTEQRRQLVGSGDRS.

Belongs to the prokaryotic/mitochondrial release factor family. Post-translationally, methylated by PrmC. Methylation increases the termination efficiency of RF1.

The protein localises to the cytoplasm. Functionally, peptide chain release factor 1 directs the termination of translation in response to the peptide chain termination codons UAG and UAA. This chain is Peptide chain release factor 1, found in Alkalilimnicola ehrlichii (strain ATCC BAA-1101 / DSM 17681 / MLHE-1).